Consider the following 164-residue polypeptide: Peptide deformylase (164 aa).

The Fe cation site is built by cysteine 87 and histidine 129. The active site involves glutamate 130. A Fe cation-binding site is contributed by histidine 133.

The protein belongs to the polypeptide deformylase family. The cofactor is Fe(2+).

The enzyme catalyses N-terminal N-formyl-L-methionyl-[peptide] + H2O = N-terminal L-methionyl-[peptide] + formate. Its function is as follows. Removes the formyl group from the N-terminal Met of newly synthesized proteins. Requires at least a dipeptide for an efficient rate of reaction. N-terminal L-methionine is a prerequisite for activity but the enzyme has broad specificity at other positions. The sequence is that of Peptide deformylase from Thermotoga neapolitana (strain ATCC 49049 / DSM 4359 / NBRC 107923 / NS-E).